Reading from the N-terminus, the 446-residue chain is Probable glycine dehydrogenase (decarboxylating) subunit 1 (446 aa).

The protein belongs to the GcvP family. N-terminal subunit subfamily. As to quaternary structure, the glycine cleavage system is composed of four proteins: P, T, L and H. In this organism, the P 'protein' is a heterodimer of two subunits.

The catalysed reaction is N(6)-[(R)-lipoyl]-L-lysyl-[glycine-cleavage complex H protein] + glycine + H(+) = N(6)-[(R)-S(8)-aminomethyldihydrolipoyl]-L-lysyl-[glycine-cleavage complex H protein] + CO2. Functionally, the glycine cleavage system catalyzes the degradation of glycine. The P protein binds the alpha-amino group of glycine through its pyridoxal phosphate cofactor; CO(2) is released and the remaining methylamine moiety is then transferred to the lipoamide cofactor of the H protein. The polypeptide is Probable glycine dehydrogenase (decarboxylating) subunit 1 (Desulfitobacterium hafniense (strain DSM 10664 / DCB-2)).